A 446-amino-acid polypeptide reads, in one-letter code: Na(+)-translocating NADH-quinone reductase subunit A (446 aa).

This sequence belongs to the NqrA family. In terms of assembly, composed of six subunits; NqrA, NqrB, NqrC, NqrD, NqrE and NqrF.

The catalysed reaction is a ubiquinone + n Na(+)(in) + NADH + H(+) = a ubiquinol + n Na(+)(out) + NAD(+). Its function is as follows. NQR complex catalyzes the reduction of ubiquinone-1 to ubiquinol by two successive reactions, coupled with the transport of Na(+) ions from the cytoplasm to the periplasm. NqrA to NqrE are probably involved in the second step, the conversion of ubisemiquinone to ubiquinol. The sequence is that of Na(+)-translocating NADH-quinone reductase subunit A from Pasteurella multocida (strain Pm70).